The primary structure comprises 227 residues: Cytidylate kinase (227 aa).

12 to 20 (GPSGAGKGT) is a binding site for ATP.

This sequence belongs to the cytidylate kinase family. Type 1 subfamily.

It is found in the cytoplasm. It carries out the reaction CMP + ATP = CDP + ADP. The enzyme catalyses dCMP + ATP = dCDP + ADP. The protein is Cytidylate kinase of Escherichia fergusonii (strain ATCC 35469 / DSM 13698 / CCUG 18766 / IAM 14443 / JCM 21226 / LMG 7866 / NBRC 102419 / NCTC 12128 / CDC 0568-73).